Reading from the N-terminus, the 933-residue chain is Bifunctional uridylyltransferase/uridylyl-removing enzyme (933 aa).

The interval 1-390 (MLSTRAASAD…RLAALARRKD (390 aa)) is uridylyltransferase. The uridylyl-removing stretch occupies residues 391–745 (VDGFVVDGER…TRIDRGRAIT (355 aa)). An HD domain is found at 506–628 (VDEHTLFALG…VQSPERLRLL (123 aa)). 2 ACT domains span residues 746 to 829 (EVTI…DLTK) and 859 to 933 (VIEV…DPSA).

This sequence belongs to the GlnD family. Mg(2+) serves as cofactor.

The enzyme catalyses [protein-PII]-L-tyrosine + UTP = [protein-PII]-uridylyl-L-tyrosine + diphosphate. It catalyses the reaction [protein-PII]-uridylyl-L-tyrosine + H2O = [protein-PII]-L-tyrosine + UMP + H(+). Its activity is regulated as follows. Uridylyltransferase (UTase) activity is inhibited by glutamine, while glutamine activates uridylyl-removing (UR) activity. Uridylylation process is dependent on ATP and 2-oxoglutarate, which are effector molecules that likely bind to PII proteins and control their activity. Functionally, modifies, by uridylylation and deuridylylation, the PII regulatory proteins GlnB and GlnZ, in response to the nitrogen status of the cell that GlnD senses through the glutamine level. Under low glutamine levels, catalyzes the conversion of the PII proteins and UTP to PII-UMP and PPi, while under higher glutamine levels, GlnD hydrolyzes PII-UMP to PII and UMP (deuridylylation). Thus, controls uridylylation state and activity of the PII proteins, and plays an important role in the regulation of nitrogen fixation and metabolism. This is Bifunctional uridylyltransferase/uridylyl-removing enzyme from Azospirillum brasilense.